The sequence spans 161 residues: MQDAITAVINSADVQGKYLDGAAMDKLKNYFASGELRVRAASVISANAATIVKEAVAKSLLYSDVTRPGGNMYTTRRYAACIRDLDYYLRYATYAMLAGDASILDERVLNGLKETYNSLGVPISSTVQAIQAIKEVTASLVGADAGKEMGVYLDYICSGLS.

The residue at position 71 (Asn71) is an N4-methylasparagine. Cys81 lines the (2R,3E)-phycocyanobilin pocket.

This sequence belongs to the phycobiliprotein family. As to quaternary structure, heterodimer of an alpha and a beta chain. In terms of processing, contains one covalently linked phycocyanobilin chromophore.

It localises to the cellular thylakoid membrane. Its function is as follows. Light-harvesting photosynthetic bile pigment-protein from the phycobiliprotein complex. Allophycocyanin has a maximum absorption at approximately 650 nanometers. In Synechocystis sp. (strain PCC 6714) (Aphanocapsa sp. (strain PCC 6714)), this protein is Allophycocyanin beta chain (apcB).